The primary structure comprises 494 residues: Probable malate:quinone oxidoreductase 3 (494 aa).

The protein belongs to the MQO family. FAD is required as a cofactor.

It carries out the reaction (S)-malate + a quinone = a quinol + oxaloacetate. It participates in carbohydrate metabolism; tricarboxylic acid cycle; oxaloacetate from (S)-malate (quinone route): step 1/1. This is Probable malate:quinone oxidoreductase 3 from Staphylococcus epidermidis (strain ATCC 12228 / FDA PCI 1200).